The chain runs to 45 residues: Large ribosomal subunit protein bL34 (45 aa).

The disordered stretch occupies residues 1–45 (MTKRTFGGTSRKRKRVSGFRVRMRSHTGRRVVRTRRKRGRSRLTV). The segment covering 10 to 45 (SRKRKRVSGFRVRMRSHTGRRVVRTRRKRGRSRLTV) has biased composition (basic residues).

The protein belongs to the bacterial ribosomal protein bL34 family.

This chain is Large ribosomal subunit protein bL34, found in Prochlorococcus marinus (strain NATL2A).